Consider the following 352-residue polypeptide: Holliday junction branch migration complex subunit RuvB (352 aa).

The large ATPase domain (RuvB-L) stretch occupies residues 13 to 201 (LPLRKKELRL…FGISQKIEFY (189 aa)). ATP contacts are provided by residues R41, G82, K85, T86, T87, 148 to 150 (EDF), R191, Y201, and R238. T86 contacts Mg(2+). A small ATPAse domain (RuvB-S) region spans residues 202–273 (NYDELKQILL…LIKKALNSYQ (72 aa)). Positions 276–352 (DKGLDSLDRH…KYIDSKNDDF (77 aa)) are head domain (RuvB-H). Positions 330 and 335 each coordinate DNA.

It belongs to the RuvB family. In terms of assembly, homohexamer. Forms an RuvA(8)-RuvB(12)-Holliday junction (HJ) complex. HJ DNA is sandwiched between 2 RuvA tetramers; dsDNA enters through RuvA and exits via RuvB. An RuvB hexamer assembles on each DNA strand where it exits the tetramer. Each RuvB hexamer is contacted by two RuvA subunits (via domain III) on 2 adjacent RuvB subunits; this complex drives branch migration. In the full resolvosome a probable DNA-RuvA(4)-RuvB(12)-RuvC(2) complex forms which resolves the HJ.

It is found in the cytoplasm. It carries out the reaction ATP + H2O = ADP + phosphate + H(+). Its function is as follows. The RuvA-RuvB-RuvC complex processes Holliday junction (HJ) DNA during genetic recombination and DNA repair, while the RuvA-RuvB complex plays an important role in the rescue of blocked DNA replication forks via replication fork reversal (RFR). RuvA specifically binds to HJ cruciform DNA, conferring on it an open structure. The RuvB hexamer acts as an ATP-dependent pump, pulling dsDNA into and through the RuvAB complex. RuvB forms 2 homohexamers on either side of HJ DNA bound by 1 or 2 RuvA tetramers; 4 subunits per hexamer contact DNA at a time. Coordinated motions by a converter formed by DNA-disengaged RuvB subunits stimulates ATP hydrolysis and nucleotide exchange. Immobilization of the converter enables RuvB to convert the ATP-contained energy into a lever motion, pulling 2 nucleotides of DNA out of the RuvA tetramer per ATP hydrolyzed, thus driving DNA branch migration. The RuvB motors rotate together with the DNA substrate, which together with the progressing nucleotide cycle form the mechanistic basis for DNA recombination by continuous HJ branch migration. Branch migration allows RuvC to scan DNA until it finds its consensus sequence, where it cleaves and resolves cruciform DNA. This Prochlorococcus marinus (strain MIT 9301) protein is Holliday junction branch migration complex subunit RuvB.